The following is a 154-amino-acid chain: Large ribosomal subunit protein uL30 (154 aa).

The segment at 114–146 is disordered; that stretch reads PTLRLHPPRGGHDGVKHPVKEGGQLGKHDTEGI. Positions 123-144 are enriched in basic and acidic residues; that stretch reads GGHDGVKHPVKEGGQLGKHDTE.

Belongs to the universal ribosomal protein uL30 family. As to quaternary structure, part of the 50S ribosomal subunit. Binds 5S rRNA.

Functionally, this is one of 5 proteins that mediate the attachment of the 5S rRNA onto the large ribosomal subunit, stabilizing the orientation of adjacent RNA domains. This is Large ribosomal subunit protein uL30 from Haloarcula marismortui (strain ATCC 43049 / DSM 3752 / JCM 8966 / VKM B-1809) (Halobacterium marismortui).